The chain runs to 860 residues: Translation initiation factor IF-2 (860 aa).

Residues 1-11 (MSDTKSGDDKT) are compositionally biased toward basic and acidic residues. Residues 1–265 (MSDTKSGDDK…MRRRQEKFKR (265 aa)) form a disordered region. A compositionally biased stretch (low complexity) spans 79 to 88 (AAPVVQEAPK). The span at 110-183 (SRSEMEARRR…RRRAEEEARR (74 aa)) shows a compositional bias: basic and acidic residues. One can recognise a tr-type G domain in the interval 358 to 525 (PRPPVVTIMG…AILLQAEILD (168 aa)). The tract at residues 367–374 (GHVDHGKT) is G1. A GTP-binding site is contributed by 367 to 374 (GHVDHGKT). Residues 392–396 (GITQH) form a G2 region. Residues 413–416 (DTPG) form a G3 region. GTP-binding positions include 413–417 (DTPGH) and 467–470 (NKID). Residues 467-470 (NKID) are G4. Positions 503–505 (SAT) are G5.

It belongs to the TRAFAC class translation factor GTPase superfamily. Classic translation factor GTPase family. IF-2 subfamily.

The protein localises to the cytoplasm. Functionally, one of the essential components for the initiation of protein synthesis. Protects formylmethionyl-tRNA from spontaneous hydrolysis and promotes its binding to the 30S ribosomal subunits. Also involved in the hydrolysis of GTP during the formation of the 70S ribosomal complex. This chain is Translation initiation factor IF-2, found in Mesorhizobium japonicum (strain LMG 29417 / CECT 9101 / MAFF 303099) (Mesorhizobium loti (strain MAFF 303099)).